Consider the following 284-residue polypeptide: Malonyl-[acyl-carrier protein] O-methyltransferase (284 aa).

Belongs to the methyltransferase superfamily.

It catalyses the reaction malonyl-[ACP] + S-adenosyl-L-methionine = malonyl-[ACP] methyl ester + S-adenosyl-L-homocysteine. It participates in cofactor biosynthesis; biotin biosynthesis. Functionally, converts the free carboxyl group of a malonyl-thioester to its methyl ester by transfer of a methyl group from S-adenosyl-L-methionine (SAM). It allows to synthesize pimeloyl-ACP via the fatty acid synthetic pathway. This is Malonyl-[acyl-carrier protein] O-methyltransferase from Legionella pneumophila subsp. pneumophila (strain Philadelphia 1 / ATCC 33152 / DSM 7513).